The following is a 636-amino-acid chain: Probable potassium transport system protein Kup (636 aa).

Transmembrane regions (helical) follow at residues 22 to 42, 64 to 84, 115 to 135, 150 to 170, 182 to 202, 220 to 240, 261 to 281, 293 to 313, 351 to 371, 383 to 403, 408 to 428, and 433 to 453; these read VGLL…SPLY, ILSL…VMFI, LMVI…MITP, FDGI…ALFL, LFGP…VHGI, FFVV…LALT, WFIL…ALLL, LLAP…ATVI, IYIG…VIGF, VAVT…MLLL, PLLA…FFAA, and IAQG…LMST.

It belongs to the HAK/KUP transporter (TC 2.A.72) family.

It localises to the cell inner membrane. The enzyme catalyses K(+)(in) + H(+)(in) = K(+)(out) + H(+)(out). Its function is as follows. Transport of potassium into the cell. Likely operates as a K(+):H(+) symporter. The chain is Probable potassium transport system protein Kup from Pseudomonas putida (strain ATCC 47054 / DSM 6125 / CFBP 8728 / NCIMB 11950 / KT2440).